Consider the following 374-residue polypeptide: Tryptophan--tRNA ligase (374 aa).

A 'HIGH' region motif is present at residues 71 to 79 (PSGRMHLGH). Residues 247–251 (KMSSS) carry the 'KMSKS' region motif.

It belongs to the class-I aminoacyl-tRNA synthetase family.

It localises to the cytoplasm. It catalyses the reaction tRNA(Trp) + L-tryptophan + ATP = L-tryptophyl-tRNA(Trp) + AMP + diphosphate + H(+). The chain is Tryptophan--tRNA ligase from Methanopyrus kandleri (strain AV19 / DSM 6324 / JCM 9639 / NBRC 100938).